The chain runs to 188 residues: MSPLQEIGTAVRMTAIFWIGCGLAYPLIFTGFAQVAFPDQANGSLVRNAQNQVIGSSLIGQKFTSERYFHGRPSSIDYKAEASGASQLAPTNKVLIERVKADAAAFEAQNGTKPTIDLVTTPGSGLDPHITPAGAAVQTARVSRARNLAPEQVRKLVSQYTEGRFLGIFGEPRVNVLALNLALDGIRR.

Residues Met13 to Ala33 form a helical membrane-spanning segment.

Belongs to the KdpC family. As to quaternary structure, the system is composed of three essential subunits: KdpA, KdpB and KdpC.

Its subcellular location is the cell inner membrane. Part of the high-affinity ATP-driven potassium transport (or Kdp) system, which catalyzes the hydrolysis of ATP coupled with the electrogenic transport of potassium into the cytoplasm. This subunit acts as a catalytic chaperone that increases the ATP-binding affinity of the ATP-hydrolyzing subunit KdpB by the formation of a transient KdpB/KdpC/ATP ternary complex. In Gloeobacter violaceus (strain ATCC 29082 / PCC 7421), this protein is Potassium-transporting ATPase KdpC subunit.